We begin with the raw amino-acid sequence, 421 residues long: Testin (421 aa).

The PET domain maps to 92–199 (MILTNPVAAK…GDVKLPCEMD (108 aa)). Positions 133-164 (EKQPVAGSEGAQYRKKQLAKQLPAHDQDPSKC) are disordered. Positions 155 to 164 (PAHDQDPSKC) are enriched in basic and acidic residues. LIM zinc-binding domains lie at 234 to 297 (YSCY…CDSE), 299 to 359 (PRCA…NHAV), and 362 to 421 (QGCH…KMMS).

This sequence belongs to the prickle / espinas / testin family. As to quaternary structure, interacts via LIM domain 1 with ZYX. Interacts (via LIM domain 3) with ENAH and VASP. Interacts with ALKBH4, talin, actin, alpha-actinin, GRIP1 and PXN. Interacts (via LIM domain 2) with ACTL7A (via N-terminus). Heterodimer with ACTL7A; the heterodimer interacts with ENAH to form a heterotrimer.

The protein resides in the cytoplasm. It is found in the cell junction. Its subcellular location is the focal adhesion. In terms of biological role, scaffold protein that may play a role in cell adhesion, cell spreading and in the reorganization of the actin cytoskeleton. Plays a role in the regulation of cell proliferation. May act as a tumor suppressor. This chain is Testin (TES), found in Callithrix jacchus (White-tufted-ear marmoset).